The following is a 215-amino-acid chain: 3-isopropylmalate dehydratase small subunit (215 aa).

Belongs to the LeuD family. LeuD type 1 subfamily. Heterodimer of LeuC and LeuD.

It carries out the reaction (2R,3S)-3-isopropylmalate = (2S)-2-isopropylmalate. Its pathway is amino-acid biosynthesis; L-leucine biosynthesis; L-leucine from 3-methyl-2-oxobutanoate: step 2/4. Its function is as follows. Catalyzes the isomerization between 2-isopropylmalate and 3-isopropylmalate, via the formation of 2-isopropylmaleate. This Xanthomonas campestris pv. campestris (strain 8004) protein is 3-isopropylmalate dehydratase small subunit.